A 317-amino-acid chain; its full sequence is Acetyl-coenzyme A carboxylase carboxyl transferase subunit alpha (317 aa).

The CoA carboxyltransferase C-terminal domain occupies 40-293 (LEKRSADALK…GDIITASLRS (254 aa)).

The protein belongs to the AccA family. As to quaternary structure, acetyl-CoA carboxylase is a heterohexamer composed of biotin carboxyl carrier protein (AccB), biotin carboxylase (AccC) and two subunits each of ACCase subunit alpha (AccA) and ACCase subunit beta (AccD).

It localises to the cytoplasm. The enzyme catalyses N(6)-carboxybiotinyl-L-lysyl-[protein] + acetyl-CoA = N(6)-biotinyl-L-lysyl-[protein] + malonyl-CoA. It functions in the pathway lipid metabolism; malonyl-CoA biosynthesis; malonyl-CoA from acetyl-CoA: step 1/1. Functionally, component of the acetyl coenzyme A carboxylase (ACC) complex. First, biotin carboxylase catalyzes the carboxylation of biotin on its carrier protein (BCCP) and then the CO(2) group is transferred by the carboxyltransferase to acetyl-CoA to form malonyl-CoA. This Brucella anthropi (strain ATCC 49188 / DSM 6882 / CCUG 24695 / JCM 21032 / LMG 3331 / NBRC 15819 / NCTC 12168 / Alc 37) (Ochrobactrum anthropi) protein is Acetyl-coenzyme A carboxylase carboxyl transferase subunit alpha.